The following is a 720-amino-acid chain: Translation initiation factor IF-2 (720 aa).

The disordered stretch occupies residues 48 to 138; it reads KKFKASQAKD…NEVEETKEMP (91 aa). Composition is skewed to low complexity over residues 60–75 and 99–113; these read KQNT…NKQN and KGKQ…NKNQ. Residues 114–123 are compositionally biased toward basic residues; sequence KNNKNKKNNK. The tr-type G domain maps to 222–391; the sequence is ERPAVVTIMG…GLVAEVQELK (170 aa). A G1 region spans residues 231 to 238; sequence GHVDHGKT. 231 to 238 contributes to the GTP binding site; it reads GHVDHGKT. Positions 256-260 are G2; sequence GITQH. The segment at 277–280 is G3; sequence DTPG. Residues 277–281 and 331–334 contribute to the GTP site; these read DTPGH and NKID. The tract at residues 331–334 is G4; that stretch reads NKID. Positions 367-369 are G5; the sequence is SAL.

Belongs to the TRAFAC class translation factor GTPase superfamily. Classic translation factor GTPase family. IF-2 subfamily.

It is found in the cytoplasm. One of the essential components for the initiation of protein synthesis. Protects formylmethionyl-tRNA from spontaneous hydrolysis and promotes its binding to the 30S ribosomal subunits. Also involved in the hydrolysis of GTP during the formation of the 70S ribosomal complex. This chain is Translation initiation factor IF-2, found in Staphylococcus epidermidis (strain ATCC 35984 / DSM 28319 / BCRC 17069 / CCUG 31568 / BM 3577 / RP62A).